The sequence spans 503 residues: V-type proton ATPase subunit B (503 aa).

Arg-378 lines the ATP pocket. Phosphoserine occurs at positions 491, 492, 502, and 503.

It belongs to the ATPase alpha/beta chains family. V-ATPase is a heteromultimeric enzyme composed of a peripheral catalytic V1 complex (components A to H) attached to an integral membrane V0 proton pore complex (components: a, c, c', c'', d, e, f and VOA1). Interacts with rav1.

Its subcellular location is the vacuole membrane. Non-catalytic subunit of the V1 complex of vacuolar(H+)-ATPase (V-ATPase), a multisubunit enzyme composed of a peripheral complex (V1) that hydrolyzes ATP and a membrane integral complex (V0) that translocates protons. V-ATPase is responsible for acidifying and maintaining the pH of intracellular compartments. This chain is V-type proton ATPase subunit B, found in Schizosaccharomyces pombe (strain 972 / ATCC 24843) (Fission yeast).